Consider the following 520-residue polypeptide: 2-isopropylmalate synthase (520 aa).

In terms of domain architecture, Pyruvate carboxyltransferase spans 12–274 (IRIFDTTLRD…DSAINTPRIV (263 aa)). Mn(2+) contacts are provided by D21, H209, H211, and N245. The segment at 396-520 (RLASMTISDV…VIAGKTAAVA (125 aa)) is regulatory domain.

Belongs to the alpha-IPM synthase/homocitrate synthase family. LeuA type 1 subfamily. Homodimer. Mn(2+) serves as cofactor.

Its subcellular location is the cytoplasm. It carries out the reaction 3-methyl-2-oxobutanoate + acetyl-CoA + H2O = (2S)-2-isopropylmalate + CoA + H(+). It participates in amino-acid biosynthesis; L-leucine biosynthesis; L-leucine from 3-methyl-2-oxobutanoate: step 1/4. Catalyzes the condensation of the acetyl group of acetyl-CoA with 3-methyl-2-oxobutanoate (2-ketoisovalerate) to form 3-carboxy-3-hydroxy-4-methylpentanoate (2-isopropylmalate). The polypeptide is 2-isopropylmalate synthase (Xanthomonas oryzae pv. oryzae (strain KACC10331 / KXO85)).